Reading from the N-terminus, the 251-residue chain is Ubiquinone biosynthesis O-methyltransferase (251 aa).

S-adenosyl-L-methionine-binding residues include Arg-36, Gly-61, Asp-82, and Ile-124.

The protein belongs to the methyltransferase superfamily. UbiG/COQ3 family.

It catalyses the reaction a 3-demethylubiquinol + S-adenosyl-L-methionine = a ubiquinol + S-adenosyl-L-homocysteine + H(+). It carries out the reaction a 3-(all-trans-polyprenyl)benzene-1,2-diol + S-adenosyl-L-methionine = a 2-methoxy-6-(all-trans-polyprenyl)phenol + S-adenosyl-L-homocysteine + H(+). It functions in the pathway cofactor biosynthesis; ubiquinone biosynthesis. Its function is as follows. O-methyltransferase that catalyzes the 2 O-methylation steps in the ubiquinone biosynthetic pathway. This is Ubiquinone biosynthesis O-methyltransferase from Rickettsia akari (strain Hartford).